The chain runs to 338 residues: DNA-directed RNA polymerase subunit alpha (338 aa).

Residues 1 to 234 are alpha N-terminal domain (alpha-NTD); it reads MIERNWNELI…DQLQIFITFE (234 aa). The alpha C-terminal domain (alpha-CTD) stretch occupies residues 250-338; it reads FNPALLKKVD…DLAKKFEDQI (89 aa).

It belongs to the RNA polymerase alpha chain family. Homodimer. The RNAP catalytic core consists of 2 alpha, 1 beta, 1 beta' and 1 omega subunit. When a sigma factor is associated with the core the holoenzyme is formed, which can initiate transcription.

It carries out the reaction RNA(n) + a ribonucleoside 5'-triphosphate = RNA(n+1) + diphosphate. DNA-dependent RNA polymerase catalyzes the transcription of DNA into RNA using the four ribonucleoside triphosphates as substrates. The sequence is that of DNA-directed RNA polymerase subunit alpha from Caulobacter sp. (strain K31).